The sequence spans 470 residues: Rhamnulokinase (470 aa).

ATP is bound at residue 12-16; the sequence is ASSGR. Substrate-binding positions include Ala-80 and 237–239; that span reads HDT. Asp-238 acts as the Proton acceptor in catalysis. Position 259 (Thr-259) interacts with ATP. Asn-296 is a binding site for substrate. Gln-304 contributes to the ATP binding site. A disulfide bridge connects residues Cys-353 and Cys-370. Gly-402 is an ATP binding site.

Belongs to the rhamnulokinase family. Mg(2+) is required as a cofactor.

The enzyme catalyses L-rhamnulose + ATP = L-rhamnulose 1-phosphate + ADP + H(+). It participates in carbohydrate degradation; L-rhamnose degradation; glycerone phosphate from L-rhamnose: step 2/3. Involved in the catabolism of L-rhamnose (6-deoxy-L-mannose). Catalyzes the transfer of the gamma-phosphate group from ATP to the 1-hydroxyl group of L-rhamnulose to yield L-rhamnulose 1-phosphate. This is Rhamnulokinase from Oceanobacillus iheyensis (strain DSM 14371 / CIP 107618 / JCM 11309 / KCTC 3954 / HTE831).